We begin with the raw amino-acid sequence, 277 residues long: Proteasome assembly chaperone 1 (277 aa).

The protein belongs to the PSMG1 family. In terms of assembly, forms a heterodimer with psmg2. Post-translationally, degraded by the proteasome upon completion of 20S proteasome maturation.

The protein localises to the cytoplasm. The protein resides in the endoplasmic reticulum. In terms of biological role, chaperone protein which promotes assembly of the 20S proteasome as part of a heterodimer with psmg2. In Danio rerio (Zebrafish), this protein is Proteasome assembly chaperone 1.